A 436-amino-acid chain; its full sequence is Methylenetetrahydrofolate--tRNA-(uracil-5-)-methyltransferase TrmFO (436 aa).

10 to 15 contacts FAD; the sequence is GAGLAG.

Belongs to the MnmG family. TrmFO subfamily. The cofactor is FAD.

Its subcellular location is the cytoplasm. The enzyme catalyses uridine(54) in tRNA + (6R)-5,10-methylene-5,6,7,8-tetrahydrofolate + NADH + H(+) = 5-methyluridine(54) in tRNA + (6S)-5,6,7,8-tetrahydrofolate + NAD(+). The catalysed reaction is uridine(54) in tRNA + (6R)-5,10-methylene-5,6,7,8-tetrahydrofolate + NADPH + H(+) = 5-methyluridine(54) in tRNA + (6S)-5,6,7,8-tetrahydrofolate + NADP(+). Its function is as follows. Catalyzes the folate-dependent formation of 5-methyl-uridine at position 54 (M-5-U54) in all tRNAs. The sequence is that of Methylenetetrahydrofolate--tRNA-(uracil-5-)-methyltransferase TrmFO from Exiguobacterium sp. (strain ATCC BAA-1283 / AT1b).